The sequence spans 518 residues: Phenylacetate 2-hydroxylase (518 aa).

Residue cysteine 437 coordinates heme.

It belongs to the cytochrome P450 family.

The catalysed reaction is 2-phenylacetate + reduced [NADPH--hemoprotein reductase] + O2 = (2-hydroxyphenyl)acetate + oxidized [NADPH--hemoprotein reductase] + H2O + H(+). It participates in aromatic compound metabolism; phenylacetate degradation. Functionally, catalyzes the hydroxylation of phenylacetate to 2-hydroxyphenylacetate in the homogentisate pathway. The homogentisate pathway is used to catabolize phenylacetate and use it as a carbon source. Can also catalyze the hydroxylation of 3-hydroxyphenylacetate to 2,5-dihydroxyphenylacetate (homogentisate) at low efficiency. The protein is Phenylacetate 2-hydroxylase (phacA) of Emericella nidulans (Aspergillus nidulans).